A 317-amino-acid chain; its full sequence is MRVQGSQRRLLGSLNSTPTATPHLGLAANQTGARCLEVSIPDGLFLSLGLVSLVENVLVVTAIAKNRNLHSPMYCFICCLALSDLLVSGSNMLETAVTLLLEAGALAARAAVVQQLDNVIDVITCSSMLSSLCFLGAIAVDRYISIFYALRYHSIVTLPRARRAIAAIWVASVLCSTLFIAYYDHAAVLLCLVVFFLAMLVLMAVLYVHMLARACQHAQGIARLHKRQRLAHQGFGLKGAATLTILLGIFFLCWGPFFLHLTLIVLCPQHPTCSCIFKNFNLFLALIICNAIIDPLIYAFRSQELRRTLKEVLLCSW.

At 1–37 (MRVQGSQRRLLGSLNSTPTATPHLGLAANQTGARCLE) the chain is on the extracellular side. N-linked (GlcNAc...) asparagine glycosylation is present at Asn29. A helical transmembrane segment spans residues 38 to 63 (VSIPDGLFLSLGLVSLVENVLVVTAI). The Cytoplasmic portion of the chain corresponds to 64 to 72 (AKNRNLHSP). Residues 73–93 (MYCFICCLALSDLLVSGSNML) traverse the membrane as a helical segment. Residues 94-118 (ETAVTLLLEAGALAARAAVVQQLDN) lie on the Extracellular side of the membrane. A helical transmembrane segment spans residues 119–140 (VIDVITCSSMLSSLCFLGAIAV). The Cytoplasmic portion of the chain corresponds to 141–163 (DRYISIFYALRYHSIVTLPRARR). Residues 164–183 (AIAAIWVASVLCSTLFIAYY) traverse the membrane as a helical segment. The Extracellular segment spans residues 184-191 (DHAAVLLC). The helical transmembrane segment at 192 to 211 (LVVFFLAMLVLMAVLYVHML) threads the bilayer. Residues 212–240 (ARACQHAQGIARLHKRQRLAHQGFGLKGA) are Cytoplasmic-facing. The helical transmembrane segment at 241-266 (ATLTILLGIFFLCWGPFFLHLTLIVL) threads the bilayer. Topologically, residues 267 to 279 (CPQHPTCSCIFKN) are extracellular. Residues 280–300 (FNLFLALIICNAIIDPLIYAF) form a helical membrane-spanning segment. At 301 to 317 (RSQELRRTLKEVLLCSW) the chain is on the cytoplasmic side. Cys315 carries S-palmitoyl cysteine lipidation.

It belongs to the G-protein coupled receptor 1 family. Interacts with MGRN1, but does not undergo MGRN1-mediated ubiquitination; this interaction competes with GNAS-binding and thus inhibits agonist-induced cAMP production. Interacts with OPN3; the interaction results in a decrease in MC1R-mediated cAMP signaling and ultimately a decrease in melanin production in melanocytes.

It localises to the cell membrane. Functionally, receptor for MSH (alpha, beta and gamma) and ACTH. The activity of this receptor is mediated by G proteins which activate adenylate cyclase. Mediates melanogenesis, the production of eumelanin (black/brown) and phaeomelanin (red/yellow), via regulation of cAMP signaling in melanocytes. The sequence is that of Melanocyte-stimulating hormone receptor (MC1R) from Macaca nigra (Celebes black macaque).